Here is an 877-residue protein sequence, read N- to C-terminus: Leucine--tRNA ligase (877 aa).

The 'HIGH' region motif lies at 43-53 (PYPSGRIHMGH). The short motif at 628 to 632 (KMSKS) is the 'KMSKS' region element. An ATP-binding site is contributed by lysine 631.

This sequence belongs to the class-I aminoacyl-tRNA synthetase family.

The protein resides in the cytoplasm. The enzyme catalyses tRNA(Leu) + L-leucine + ATP = L-leucyl-tRNA(Leu) + AMP + diphosphate. In Brucella suis biovar 1 (strain 1330), this protein is Leucine--tRNA ligase.